The primary structure comprises 186 residues: Ribosome-recycling factor (186 aa).

Belongs to the RRF family.

Its subcellular location is the cytoplasm. Its function is as follows. Responsible for the release of ribosomes from messenger RNA at the termination of protein biosynthesis. May increase the efficiency of translation by recycling ribosomes from one round of translation to another. The polypeptide is Ribosome-recycling factor (Maricaulis maris (strain MCS10) (Caulobacter maris)).